The primary structure comprises 130 residues: MMPAKKTARKRRVKKHVESGVAHIHSTFNNTLVMITDVQGNAVAWSSAGALGFKGSRKSTPFAAQMAAEAAAKSAMDQGMKHVEVSVKGPGAGRESAIRSLQATGLEITAIRDVTPVPHNGSRPPKRRRV.

The protein belongs to the universal ribosomal protein uS11 family. As to quaternary structure, part of the 30S ribosomal subunit. Interacts with proteins S7 and S18. Binds to IF-3.

In terms of biological role, located on the platform of the 30S subunit, it bridges several disparate RNA helices of the 16S rRNA. Forms part of the Shine-Dalgarno cleft in the 70S ribosome. This is Small ribosomal subunit protein uS11 from Lactobacillus helveticus (strain DPC 4571).